We begin with the raw amino-acid sequence, 142 residues long: MAKKVQAYVKLQVAAGMANPSPPVGPALGQQGVNIMEFCKAFNAKTESMEKGLPIPVVITVYADRSFTFVTKTPPAAVLLKKAAGIKSGSGKPNKDKVGKISRAQLQEIAQTKAADMTGADIEAMTRSIEGTARSMGLVVED.

Belongs to the universal ribosomal protein uL11 family. Part of the ribosomal stalk of the 50S ribosomal subunit. Interacts with L10 and the large rRNA to form the base of the stalk. L10 forms an elongated spine to which L12 dimers bind in a sequential fashion forming a multimeric L10(L12)X complex. One or more lysine residues are methylated.

Its function is as follows. Forms part of the ribosomal stalk which helps the ribosome interact with GTP-bound translation factors. The protein is Large ribosomal subunit protein uL11 of Klebsiella pneumoniae (strain 342).